We begin with the raw amino-acid sequence, 1062 residues long: Zinc finger protein swm (1062 aa).

The PWI domain occupies 7 to 75 (DKLKDWLSVV…ERLFDAIASE (69 aa)). Disordered regions lie at residues 119–145 (ADSP…QASQ) and 171–340 (KPAF…PDRV). Residues 134 to 145 (DSNQVKLEQASQ) are compositionally biased toward polar residues. Residues 172-182 (PAFDHKTKDSH) show a composition bias toward basic and acidic residues. Residues 197–207 (SASPPGRSSGV) are compositionally biased toward low complexity. Gly residues predominate over residues 208-220 (SGSGGGGPGGAGL). Positions 234–249 (SRRRRASLRSRSRSRS) are enriched in basic residues. 2 stretches are compositionally biased toward basic and acidic residues: residues 264–273 (RRVNEREKTQ) and 294–310 (RNFD…DRPR). The span at 322–340 (RSMSPERNARRNQNSPDRV) shows a compositional bias: polar residues. The C3H1-type zinc-finger motif lies at 363–391 (SHPRQRCRDFDEKGYCVRGETCPWDHGVN). The disordered stretch occupies residues 416–463 (EIWARSGGPPPGAGQGPVPPPTQPGQTTINPFSGNVRPTTLMSGSGPS). Positions 423-438 (GPPPGAGQGPVPPPTQ) are enriched in pro residues. Residues 444–461 (INPFSGNVRPTTLMSGSG) show a composition bias toward polar residues. Residues 561-635 (SSLELRKVPR…RFIKVFWHND (75 aa)) enclose the RRM domain. 5 disordered regions span residues 666-704 (NVPA…QANT), 716-741 (TTTA…LNPA), 822-847 (QDQL…KEQQ), 886-920 (SAAN…PTRV), and 1004-1062 (APVE…SWRR). The span at 721–733 (GSAGGAAGAGAPG) shows a compositional bias: gly residues. The span at 823-840 (DQLQAQMQQQQQQQQPPV) shows a compositional bias: low complexity. Residues 1018-1037 (SLENPKQLIQSVSESESLLG) show a composition bias toward polar residues. The span at 1046 to 1056 (LEDEEEDEESE) shows a compositional bias: acidic residues.

Its subcellular location is the nucleus. Functionally, negatively regulates Hedgehog (hh) protein signal in wing development. Regulates neural-specific glycosylation by binding to FucTA mRNA and facilitating its nuclear export in neural cells. The protein is Zinc finger protein swm of Drosophila melanogaster (Fruit fly).